The following is a 619-amino-acid chain: Translation initiation factor IF-2 (619 aa).

Low complexity-rich tracts occupy residues 1-18 and 98-111; these read MTLN…TTPK and PPQL…LTKT. 2 disordered regions span residues 1-24 and 90-113; these read MTLN…KETD and SEPQ…KTKP. The region spanning 121–289 is the tr-type G domain; it reads KKSPIVTIMG…ILLVSEIQNL (169 aa). Residues 130-137 form a G1 region; the sequence is GHVDHGKT. A GTP-binding site is contributed by 130 to 137; the sequence is GHVDHGKT. Residues 155–159 form a G2 region; that stretch reads GITQH. The tract at residues 176–179 is G3; it reads DTPG. Residues 176-180 and 230-233 each bind GTP; these read DTPGH and NKID. The tract at residues 230–233 is G4; that stretch reads NKID. Residues 266–268 form a G5 region; it reads SAL.

Belongs to the TRAFAC class translation factor GTPase superfamily. Classic translation factor GTPase family. IF-2 subfamily.

Its subcellular location is the cytoplasm. Its function is as follows. One of the essential components for the initiation of protein synthesis. Protects formylmethionyl-tRNA from spontaneous hydrolysis and promotes its binding to the 30S ribosomal subunits. Also involved in the hydrolysis of GTP during the formation of the 70S ribosomal complex. The protein is Translation initiation factor IF-2 of Onion yellows phytoplasma (strain OY-M).